Consider the following 320-residue polypeptide: tRNA N6-adenosine threonylcarbamoyltransferase (320 aa).

Fe cation is bound by residues His113 and His117. Substrate contacts are provided by residues 143–147, Asp176, Gly189, Asp193, and Asn281; that span reads VVSGG. Position 305 (Asp305) interacts with Fe cation.

The protein belongs to the KAE1 / TsaD family. Fe(2+) is required as a cofactor.

It is found in the cytoplasm. The catalysed reaction is L-threonylcarbamoyladenylate + adenosine(37) in tRNA = N(6)-L-threonylcarbamoyladenosine(37) in tRNA + AMP + H(+). In terms of biological role, required for the formation of a threonylcarbamoyl group on adenosine at position 37 (t(6)A37) in tRNAs that read codons beginning with adenine. Is involved in the transfer of the threonylcarbamoyl moiety of threonylcarbamoyl-AMP (TC-AMP) to the N6 group of A37, together with TsaE and TsaB. TsaD likely plays a direct catalytic role in this reaction. The protein is tRNA N6-adenosine threonylcarbamoyltransferase of Mycoplasmoides gallisepticum (strain R(low / passage 15 / clone 2)) (Mycoplasma gallisepticum).